The following is a 444-amino-acid chain: Nuclear distribution protein PAC1 (444 aa).

A coiled-coil region spans residues 59 to 87 (TAIARLQRRIMSLEQNIRDLREASIEMNA). WD repeat units follow at residues 113–152 (TLESPVTGVRLHPELAVVFVSTEQGRLHCFDLMDITLPLA), 156–199 (AHTR…KLLR), 204–251 (HEHV…CLKS), 254–293 (PHSDWVRCLDVYGEFLITGCQDSTLRLTHWPSGNGLSVGL), 307–347 (SLQD…RLPQ), 367–406 (GHDSWIKAVGSRGDHVFTASDDKSVICWNWTNGQCLKKWN), and 408–444 (IHQGFVTCIDLDDSNHPLKRKIMVTGGIDCKCHIFMQ).

The protein belongs to the WD repeat LIS1/nudF family. In terms of assembly, self-associates. Interacts with NDL1 and dynein.

It is found in the cytoplasm. Its subcellular location is the cytoskeleton. It localises to the spindle pole. Its function is as follows. Positively regulates the activity of the minus-end directed microtubule motor protein dynein. Plays a central role in positioning the mitotic spindle at the bud neck during cell division. Targets cytoplasmic dynein to microtubule plus ends, thereby promoting dynein-mediated microtubule sliding along the bud cortex and consequently the movement of the mitotic spindle to the bud neck. This Zygosaccharomyces rouxii (strain ATCC 2623 / CBS 732 / NBRC 1130 / NCYC 568 / NRRL Y-229) protein is Nuclear distribution protein PAC1.